Consider the following 238-residue polypeptide: Mitochondrial inner membrane protease ATP23 (238 aa).

His-138 lines the a divalent metal cation pocket. Glu-139 is a catalytic residue. His-142 provides a ligand contact to a divalent metal cation.

It belongs to the peptidase M76 family.

The protein resides in the mitochondrion inner membrane. In terms of biological role, has a dual role in the assembly of mitochondrial ATPase. Acts as a protease that removes N-terminal residues of mitochondrial ATPase CF(0) subunit 6 at the intermembrane space side. Also involved in the correct assembly of the membrane-embedded ATPase CF(0) particle, probably mediating association of subunit 6 with the subunit 9 ring. This chain is Mitochondrial inner membrane protease ATP23 (ATP23), found in Candida albicans (strain SC5314 / ATCC MYA-2876) (Yeast).